A 242-amino-acid polypeptide reads, in one-letter code: Trypsin-1 (242 aa).

Positions 1–15 are cleaved as a signal peptide; it reads MISLVFVLLIGAAFA. A propeptide spans 16–20 (activation peptide); it reads TEDDK. Positions 21–240 constitute a Peptidase S1 domain; that stretch reads IVGGYECKAY…FNDWLTSTMA (220 aa). 6 cysteine pairs are disulfide-bonded: Cys-27–Cys-156, Cys-45–Cys-61, Cys-129–Cys-229, Cys-136–Cys-202, Cys-167–Cys-181, and Cys-192–Cys-216. The active-site Charge relay system is His-60. Ca(2+)-binding residues include Glu-72, Asn-74, Val-77, and Glu-82. The Charge relay system role is filled by Asp-104. The active-site Charge relay system is the Ser-196.

The protein belongs to the peptidase S1 family. Ca(2+) serves as cofactor.

Its subcellular location is the secreted. The protein resides in the extracellular space. It catalyses the reaction Preferential cleavage: Arg-|-Xaa, Lys-|-Xaa.. This chain is Trypsin-1, found in Salmo salar (Atlantic salmon).